A 153-amino-acid chain; its full sequence is Transcriptional repressor NrdR (153 aa).

Residues 1 to 20 (MKCPFCNSADTRVKNSRHSD) form a disordered region. A zinc finger spans residues 3–34 (CPFCNSADTRVKNSRHSDDNMSVRRRRLCEVC). A compositionally biased stretch (basic and acidic residues) spans 11 to 20 (TRVKNSRHSD). Residues 49–139 (IMVLKKDGRM…VYMDFSDADD (91 aa)) enclose the ATP-cone domain.

Belongs to the NrdR family. Zn(2+) is required as a cofactor.

Its function is as follows. Negatively regulates transcription of bacterial ribonucleotide reductase nrd genes and operons by binding to NrdR-boxes. The polypeptide is Transcriptional repressor NrdR (Anaplasma phagocytophilum (strain HZ)).